The chain runs to 382 residues: Heme A synthase (382 aa).

7 consecutive transmembrane segments (helical) span residues isoleucine 37 to leucine 57, valine 126 to alanine 146, leucine 152 to serine 172, leucine 188 to glutamate 208, serine 231 to isoleucine 251, leucine 288 to tryptophan 308, and leucine 332 to phenylalanine 352. Heme is bound at residue histidine 293. Histidine 353 is a heme binding site. A helical membrane pass occupies residues leucine 356–alanine 376.

Belongs to the COX15/CtaA family. Type 2 subfamily. As to quaternary structure, interacts with CtaB. The cofactor is heme b.

The protein localises to the cell membrane. The catalysed reaction is Fe(II)-heme o + 2 A + H2O = Fe(II)-heme a + 2 AH2. Its pathway is porphyrin-containing compound metabolism; heme A biosynthesis; heme A from heme O: step 1/1. Catalyzes the conversion of heme O to heme A by two successive hydroxylations of the methyl group at C8. The first hydroxylation forms heme I, the second hydroxylation results in an unstable dihydroxymethyl group, which spontaneously dehydrates, resulting in the formyl group of heme A. This chain is Heme A synthase, found in Roseobacter denitrificans (strain ATCC 33942 / OCh 114) (Erythrobacter sp. (strain OCh 114)).